The primary structure comprises 88 residues: Small ribosomal subunit protein bS20 (88 aa).

The segment at 1-27 (MANTPQAKKRARQNEKARKHNASMRSM) is disordered. A compositionally biased stretch (basic residues) spans 7 to 22 (AKKRARQNEKARKHNA).

The protein belongs to the bacterial ribosomal protein bS20 family.

Binds directly to 16S ribosomal RNA. This chain is Small ribosomal subunit protein bS20, found in Cellvibrio japonicus (strain Ueda107) (Pseudomonas fluorescens subsp. cellulosa).